Consider the following 812-residue polypeptide: Valine--tRNA ligase (812 aa).

The short motif at 46–56 (PTVSGQLHIGH) is the 'HIGH' region element. The short motif at 536 to 540 (KMSKS) is the 'KMSKS' region element. K539 serves as a coordination point for ATP.

This sequence belongs to the class-I aminoacyl-tRNA synthetase family. ValS type 2 subfamily. Monomer.

The protein localises to the cytoplasm. It catalyses the reaction tRNA(Val) + L-valine + ATP = L-valyl-tRNA(Val) + AMP + diphosphate. In terms of biological role, catalyzes the attachment of valine to tRNA(Val). As ValRS can inadvertently accommodate and process structurally similar amino acids such as threonine, to avoid such errors, it has a 'posttransfer' editing activity that hydrolyzes mischarged Thr-tRNA(Val) in a tRNA-dependent manner. This chain is Valine--tRNA ligase, found in Rickettsia rickettsii (strain Iowa).